We begin with the raw amino-acid sequence, 222 residues long: Probable mitochondrial import inner membrane translocase subunit Tim17 3 (222 aa).

3 consecutive transmembrane segments (helical) span residues 16–36, 60–80, and 115–135; these read CGCA…LKGF, SIAG…CALV, and ALVG…VATI.

Belongs to the Tim17/Tim22/Tim23 family. As to quaternary structure, component of the TIM23 complex at least composed of Tim23, Tim17 (Tim17a1, Tim17a2 or Tim17b1) and a Tim50. The complex interacts with the Tim44 component of the PAM complex.

The protein localises to the mitochondrion inner membrane. Functionally, essential component of the TIM23 complex, a complex that mediates the translocation of transit peptide-containing proteins across the mitochondrial inner membrane. This chain is Probable mitochondrial import inner membrane translocase subunit Tim17 3 (Tim17a1), found in Drosophila melanogaster (Fruit fly).